The sequence spans 436 residues: Septin-7 (436 aa).

Position 2 is an N-acetylserine (S2). Residue Y29 is modified to Phosphotyrosine. Residues 46–315 (RGFEFTLMVV…ENYRSRKLAA (270 aa)) form the Septin-type G domain. The tract at residues 46 to 316 (RGFEFTLMVV…NYRSRKLAAV (271 aa)) is interaction with SEPTIN12. Residues 56–63 (GESGLGKS) form a G1 motif region. 56–63 (GESGLGKS) is a binding site for GTP. S76 is modified (phosphoserine). Residues T89, G115, and 194–202 (KADTLTPEE) each bind GTP. The tract at residues 112–115 (DTPG) is G3 motif. The segment at 193-196 (AKAD) is G4 motif. Position 227 is a phosphothreonine (T227). Residues G249 and R264 each contribute to the GTP site. Residues 331-436 (TKSPLAQMEE…EKNKKKGKIF (106 aa)) are a coiled coil. S333 is subject to Phosphoserine. An N6-acetyllysine modification is found at K372. The segment covering 377 to 409 (ELQRRHEQMKKNLEAQHKELEEKRRQFEEEKAN) has biased composition (basic and acidic residues). Positions 377 to 436 (ELQRRHEQMKKNLEAQHKELEEKRRQFEEEKANWEAQQRILEQQNSSRTLEKNKKKGKIF) are disordered. Residue S423 is modified to Phosphoserine. A Phosphothreonine modification is found at T425.

The protein belongs to the TRAFAC class TrmE-Era-EngA-EngB-Septin-like GTPase superfamily. Septin GTPase family. In terms of assembly, septins polymerize into heterooligomeric protein complexes that form filaments, and associate with cellular membranes, actin filaments and microtubules. GTPase activity is required for filament formation. Filaments are assembled from asymmetrical heterotrimers, composed of SEPTIN2, SEPTIN6 and SEPTIN7 that associate head-to-head to form a hexameric unit. Within the trimer, directly interacts with SEPTIN6, while interaction with SEPTIN2 seems indirect. In the absence of SEPTIN6, forms homodimers. Interacts directly with CENPE and links CENPE to septin filaments composed of SEPTIN2, SEPTIN6 and SEPTIN7. Interacts with SEPTIN8, SEPTIN9 and SEPTIN11. Component of a septin core octameric complex consisting of SEPTIN12, SEPTIN7, SEPTIN6 and SEPTIN2 or SEPTIN4 in the order 12-7-6-2-2-6-7-12 or 12-7-6-4-4-6-7-12 and located in the sperm annulus; the SEPTIN12:SEPTIN7 association is mediated by the respective GTP-binding domains. Interacts with SEPTIN2 and SEPTIN5. In terms of tissue distribution, expressed in the cerebral cortex (at protein level).

The protein resides in the cytoplasm. Its subcellular location is the chromosome. It is found in the centromere. It localises to the kinetochore. The protein localises to the cytoskeleton. The protein resides in the spindle. Its subcellular location is the cleavage furrow. It is found in the midbody. It localises to the cilium axoneme. The protein localises to the cell projection. The protein resides in the cilium. Its subcellular location is the flagellum. Filament-forming cytoskeletal GTPase. Required for normal organization of the actin cytoskeleton. Required for normal progress through mitosis. Involved in cytokinesis. Required for normal association of CENPE with the kinetochore. Plays a role in ciliogenesis and collective cell movements. Forms a filamentous structure with SEPTIN12, SEPTIN6, SEPTIN2 and probably SEPTIN4 at the sperm annulus which is required for the structural integrity and motility of the sperm tail during postmeiotic differentiation. The protein is Septin-7 of Mus musculus (Mouse).